Here is a 307-residue protein sequence, read N- to C-terminus: E3 ubiquitin-protein ligase PHF7 (307 aa).

The C2HC pre-PHD-type zinc-finger motif lies at 30-68 (SPVCLLCLQEPGDPEKLGEFLQKDNLCVHYFCLILSSRL). Residues C33, C36, H58, and C61 each coordinate Zn(2+). The tract at residues 67–92 (RLPQKGQPNRGLHGFMPEDIKREAVR) is required for interaction and ubiquitination of the nucleosome core particle. The PHD-type zinc-finger motif lies at 96-145 (KICFVCKKKGAAIRCQNDQCVQNFHLPCGQERGCLSQFFGEYKSYCRKHR). The Zn(2+) site is built by C98, C101, C110, C115, H120, C123, C141, H144, C160, C163, C179, C180, H186, C189, C204, C207, C248, C253, C273, C276, H282, C285, C297, and C300. The interval 150-307 (IHQGSLGEES…NECLPASTTS (158 aa)) is required for interaction with ubiquitinated UBE2D2. Residues 160–208 (CVLCCENLSRTSVENIQSPCCSQAIYHRKCIQKYAHTSAKHFFKCPQCN) form an RING-type; degenerate zinc finger. The tract at residues 244–301 (RYRHCDAPICLYEQGRDSFEDEGRWRLILCATCGSHGTHRDCSSLRPNSKKWECNECL) is required for association with and ubiquitination of H3.

In terms of assembly, interacts with MEF2C; the interaction promotes MEF2C binding to its transcription targets. Interacts with GATA4; the interaction promotes GATA4 binding to its transcription targets. Interacts with UBE2D2; the interaction inhibits cleavage of PHF7 and promotes association of the complex with the nucleosome core particle. Expressed in Leydig cells and in developing spermatids (at protein level). Highly expressed in Sertoli cells in testis.

The protein resides in the nucleus. It catalyses the reaction S-ubiquitinyl-[E2 ubiquitin-conjugating enzyme]-L-cysteine + [acceptor protein]-L-lysine = [E2 ubiquitin-conjugating enzyme]-L-cysteine + N(6)-ubiquitinyl-[acceptor protein]-L-lysine.. The protein operates within protein modification; protein ubiquitination. In terms of biological role, E3 ubiquitin-protein ligase which ubiquitinates histone H3 at 'Lys-14'. Required for male fertility, via inhibition of SPOP-mediated BRDT degradation when in the presence of acetylated histone H4 in early condensing spermatids. Stabilization of BRDT allows it to facilitate histone removal in early condensing spermatids and promote the progression of histone-to-protamine exchange. Promotes the expression of steroidogenesis proteins in the testes, and as a result plays a role in maintaining testosterone levels and repressing osteoclastogenesis. Promotes transcription of cardiac enhancer genes by facilitating binding of cardiac transcription factors such as MEF2C and GATA4 to target gene promoters. Ubiquitinates histone H4. Ubiquitinates histone H2A and H3 as part of the nucleosome core particle. In Mus musculus (Mouse), this protein is E3 ubiquitin-protein ligase PHF7.